A 678-amino-acid polypeptide reads, in one-letter code: DNA ligase (678 aa).

NAD(+)-binding positions include 35–39, 84–85, and Glu-115; these read DEEYD and SL. Lys-117 serves as the catalytic N6-AMP-lysine intermediate. NAD(+) contacts are provided by Arg-138, Glu-172, Lys-288, and Lys-312. Residues Cys-406, Cys-409, Cys-425, and Cys-430 each contribute to the Zn(2+) site. In terms of domain architecture, BRCT spans 589-678; it reads VQSKILSNLT…IKNLRQQKLF (90 aa).

It belongs to the NAD-dependent DNA ligase family. LigA subfamily. Requires Mg(2+) as cofactor. Mn(2+) serves as cofactor.

The enzyme catalyses NAD(+) + (deoxyribonucleotide)n-3'-hydroxyl + 5'-phospho-(deoxyribonucleotide)m = (deoxyribonucleotide)n+m + AMP + beta-nicotinamide D-nucleotide.. Functionally, DNA ligase that catalyzes the formation of phosphodiester linkages between 5'-phosphoryl and 3'-hydroxyl groups in double-stranded DNA using NAD as a coenzyme and as the energy source for the reaction. It is essential for DNA replication and repair of damaged DNA. In Pseudothermotoga lettingae (strain ATCC BAA-301 / DSM 14385 / NBRC 107922 / TMO) (Thermotoga lettingae), this protein is DNA ligase.